The primary structure comprises 220 residues: Adenylate kinase (220 aa).

ATP is bound at residue 10–15; it reads GAGKGT. The NMP stretch occupies residues 30-59; sequence STGDMLRAAVKAGTPLGVEAKTYMDEGKLV. Residues threonine 31, arginine 36, 57–59, 85–88, and glutamine 92 contribute to the AMP site; these read KLV and GFPR. Residues 122 to 159 form an LID region; sequence GRRTHPASGRTYHVKFNPPKVEGKDDVTGEPLVQRDDD. ATP contacts are provided by residues arginine 123 and 132-133; that span reads TY. The AMP site is built by arginine 156 and arginine 167. Residue glycine 206 participates in ATP binding.

This sequence belongs to the adenylate kinase family. Monomer.

It localises to the cytoplasm. It catalyses the reaction AMP + ATP = 2 ADP. It functions in the pathway purine metabolism; AMP biosynthesis via salvage pathway; AMP from ADP: step 1/1. In terms of biological role, catalyzes the reversible transfer of the terminal phosphate group between ATP and AMP. Plays an important role in cellular energy homeostasis and in adenine nucleotide metabolism. This Burkholderia mallei (strain NCTC 10247) protein is Adenylate kinase.